The chain runs to 248 residues: Tryptophan synthase alpha chain (248 aa).

Active-site proton acceptor residues include Glu36 and Asp47.

This sequence belongs to the TrpA family. Tetramer of two alpha and two beta chains.

The enzyme catalyses (1S,2R)-1-C-(indol-3-yl)glycerol 3-phosphate + L-serine = D-glyceraldehyde 3-phosphate + L-tryptophan + H2O. The protein operates within amino-acid biosynthesis; L-tryptophan biosynthesis; L-tryptophan from chorismate: step 5/5. The alpha subunit is responsible for the aldol cleavage of indoleglycerol phosphate to indole and glyceraldehyde 3-phosphate. In Archaeoglobus fulgidus (strain ATCC 49558 / DSM 4304 / JCM 9628 / NBRC 100126 / VC-16), this protein is Tryptophan synthase alpha chain.